The primary structure comprises 740 residues: Alpha-1,6-mannosylglycoprotein 6-beta-N-acetylglucosaminyltransferase A (740 aa).

The Cytoplasmic segment spans residues 1–13 (MAFFSPWKLSSQK). A helical; Signal-anchor for type II membrane protein membrane pass occupies residues 14 to 30 (LGFFLVTFGFIWGMMLL). Residues 31–740 (HFTIQQRTQP…GQVALCKDCL (710 aa)) are Lumenal-facing. 3 N-linked (GlcNAc...) asparagine glycosylation sites follow: asparagine 109, asparagine 114, and asparagine 117. Intrachain disulfides connect cysteine 144–cysteine 182, cysteine 155–cysteine 195, cysteine 171–cysteine 337, cysteine 371–cysteine 625, cysteine 648–cysteine 723, cysteine 652–cysteine 725, cysteine 659–cysteine 712, cysteine 680–cysteine 701, and cysteine 736–cysteine 739. The segment at 212–740 (NSLAEIRTDF…GQVALCKDCL (529 aa)) is sufficient for catalytic activity. The N-linked (GlcNAc...) asparagine glycan is linked to asparagine 333. 377 to 378 (DS) provides a ligand contact to substrate. N-linked (GlcNAc...) asparagine glycans are attached at residues asparagine 432 and asparagine 446. Residue glutamate 525 participates in UDP-N-acetyl-alpha-D-glucosamine binding. Lysine 553 serves as a coordination point for substrate.

Belongs to the glycosyltransferase 18 family. In terms of processing, N-glycosylated. A secreted form is released from the membrane after cleavage by gamma-secretase. Detected in cerebellum.

The protein localises to the golgi apparatus membrane. Its subcellular location is the perikaryon. The protein resides in the secreted. It catalyses the reaction N(4)-{beta-D-GlcNAc-(1-&gt;2)-[beta-D-GlcNAc-(1-&gt;4)]-alpha-D-Man-(1-&gt;3)-[beta-D-GlcNAc-(1-&gt;2)-alpha-D-Man-(1-&gt;6)]-beta-D-Man-(1-&gt;4)-beta-D-GlcNAc-(1-&gt;4)-beta-D-GlcNAc}-L-asparaginyl-[protein] + UDP-N-acetyl-alpha-D-glucosamine = N(4)-{beta-D-GlcNAc-(1-&gt;2)-[beta-D-GlcNAc-(1-&gt;4)]-alpha-D-Man-(1-&gt;3)-[beta-D-GlcNAc-(1-&gt;2)-[beta-D-GlcNAc-(1-&gt;6)]-alpha-D-Man-(1-&gt;6)]-beta-D-Man-(1-&gt;4)-beta-D-GlcNAc-(1-&gt;4)-beta-D-GlcNAc}-L-asparaginyl-[protein] + UDP + H(+). It functions in the pathway protein modification; protein glycosylation. Catalyzes the addition of N-acetylglucosamine (GlcNAc) in beta 1-6 linkage to the alpha-linked mannose of biantennary N-linked oligosaccharides. Catalyzes an important step in the biosynthesis of branched, complex-type N-glycans, such as those found on EGFR, TGFR (TGF-beta receptor) and CDH2. Via its role in the biosynthesis of complex N-glycans, plays an important role in the activation of cellular signaling pathways, reorganization of the actin cytoskeleton, cell-cell adhesion and cell migration. MGAT5-dependent EGFR N-glycosylation enhances the interaction between EGFR and LGALS3 and thereby prevents rapid EGFR endocytosis and prolongs EGFR signaling. Required for efficient interaction between TGFB1 and its receptor. Enhances activation of intracellular signaling pathways by several types of growth factors, including FGF2, PDGF, IGF, TGFB1 and EGF. MGAT5-dependent CDH2 N-glycosylation inhibits CDH2-mediated homotypic cell-cell adhesion and contributes to the regulation of downstream signaling pathways. Promotes cell migration. Contributes to the regulation of the inflammatory response. MGAT5-dependent TCR N-glycosylation enhances the interaction between TCR and LGALS3, limits agonist-induced TCR clustering, and thereby dampens TCR-mediated responses to antigens. Required for normal leukocyte evasation and accumulation at sites of inflammation. Inhibits attachment of monocytes to the vascular endothelium and subsequent monocyte diapedesis. Its function is as follows. Promotes proliferation of umbilical vein endothelial cells and angiogenesis, at least in part by promoting the release of the growth factor FGF2 from the extracellular matrix. This is Alpha-1,6-mannosylglycoprotein 6-beta-N-acetylglucosaminyltransferase A (Mgat5) from Mus musculus (Mouse).